A 504-amino-acid polypeptide reads, in one-letter code: Arabinose import ATP-binding protein AraG (504 aa).

2 ABC transporter domains span residues 8-243 (LSFR…MVGR) and 256-499 (YGEE…MPKV). 40–47 (GENGAGKS) contacts ATP.

It belongs to the ABC transporter superfamily. Arabinose importer (TC 3.A.1.2.2) family. The complex is composed of two ATP-binding proteins (AraG), two transmembrane proteins (AraH) and a solute-binding protein (AraF).

The protein localises to the cell inner membrane. The catalysed reaction is L-arabinose(out) + ATP + H2O = L-arabinose(in) + ADP + phosphate + H(+). Its function is as follows. Part of the ABC transporter complex AraFGH involved in arabinose import. Responsible for energy coupling to the transport system. In Shigella sonnei (strain Ss046), this protein is Arabinose import ATP-binding protein AraG.